The chain runs to 156 residues: 2-C-methyl-D-erythritol 2,4-cyclodiphosphate synthase (156 aa).

Residues Asp9 and His11 each contribute to the a divalent metal cation site. 4-CDP-2-C-methyl-D-erythritol 2-phosphate contacts are provided by residues 9–11 (DAH) and 36–37 (HS). A divalent metal cation is bound at residue His44. 58–60 (NIG) is a binding site for 4-CDP-2-C-methyl-D-erythritol 2-phosphate.

This sequence belongs to the IspF family. In terms of assembly, homotrimer. A divalent metal cation serves as cofactor.

The catalysed reaction is 4-CDP-2-C-methyl-D-erythritol 2-phosphate = 2-C-methyl-D-erythritol 2,4-cyclic diphosphate + CMP. The protein operates within isoprenoid biosynthesis; isopentenyl diphosphate biosynthesis via DXP pathway; isopentenyl diphosphate from 1-deoxy-D-xylulose 5-phosphate: step 4/6. Functionally, involved in the biosynthesis of isopentenyl diphosphate (IPP) and dimethylallyl diphosphate (DMAPP), two major building blocks of isoprenoid compounds. Catalyzes the conversion of 4-diphosphocytidyl-2-C-methyl-D-erythritol 2-phosphate (CDP-ME2P) to 2-C-methyl-D-erythritol 2,4-cyclodiphosphate (ME-CPP) with a corresponding release of cytidine 5-monophosphate (CMP). The polypeptide is 2-C-methyl-D-erythritol 2,4-cyclodiphosphate synthase (Kosmotoga olearia (strain ATCC BAA-1733 / DSM 21960 / TBF 19.5.1)).